The sequence spans 996 residues: Phototropin-1 (996 aa).

The tract at residues 1-184 (MEPTEKPSTK…PGGRSGIPRV (184 aa)) is disordered. Phosphoserine is present on residues Ser23 and Ser58. Residues 49-59 (QNLSDPRGTSP) show a composition bias toward polar residues. Positions 60–70 (QPRPQQEPAPS) are enriched in pro residues. The span at 141–153 (SGGTENDPNGKKT) shows a compositional bias: polar residues. Over residues 155–166 (SQRNSQNSCRSS) the composition is skewed to low complexity. A PAS 1 domain is found at 184 to 257 (VSEDLKDALS…AKIRETLAAG (74 aa)). Position 185 is a phosphoserine (Ser185). Asn233 is an FMN binding site. Residue Cys234 is modified to S-4a-FMN cysteine. FMN-binding residues include Arg235, Gln238, Arg251, Asn266, Asn276, Gln297, and Lys302. Residues 258 to 312 (NNYCGRILNYKKDGTSFWNLLTIAPIKDESGKVLKFIGMQVEVSKHTEGAKEKAL) enclose the PAC 1 domain. 3 positions are modified to phosphoserine: Ser350, Ser376, and Ser410. Disordered stretches follow at residues 351-413 (ESTN…SLSF) and 434-453 (YGEE…SVDD). Residues 434–443 (YGEEDDEISD) are compositionally biased toward acidic residues. The segment covering 444–453 (RDERPESVDD) has biased composition (basic and acidic residues). Phosphoserine is present on Ser450. The 74-residue stretch at 462-535 (KGIDLATTLE…KKIRNAIDNQ (74 aa)) folds into the PAS 2 domain. Position 511 (Asn511) interacts with FMN. Cys512 is modified (S-4a-FMN cysteine). FMN contacts are provided by Arg513, Gln516, Arg529, Asn544, Asn554, Phe556, and Gln575. The region spanning 536 to 590 (TEVTVQLINYTKSGKKFWNIFHLQPMRDQKGEVQYFIGVQLDGSKHVEPVRNVIE) is the PAC 2 domain. The Protein kinase domain maps to 663 to 952 (FKPVKPLGSG…ANEVKQHSFF (290 aa)). Residues 669 to 677 (LGSGDTGSV) and Lys692 each bind ATP. Asp788 acts as the Proton acceptor in catalysis. The segment at 806–862 (DFDLSCLTSCKPQLLIPSIDEKKKKKQQKSQQTPIFMAEPMRASNSFVGTEEYIAPE) is activation loop.

This sequence belongs to the protein kinase superfamily. AGC Ser/Thr protein kinase family. In terms of assembly, homodimer; disulfide-linked. Interacts with PKS1, PKS2, RPT2, RPT3, PHOT2 and BLUS1. Subunit of a complex made of CAR6, PHOT1 and RPT3/NPH3. Associates with CBC1 and CBC2. Binds to BHP. FMN is required as a cofactor. In terms of processing, autophosphorylated at Ser-185, Ser-350 and Ser-410 in response to blue light irradiation. 2 molecules of FMN bind covalently to cysteines after exposure to blue light and are reversed in the dark. In terms of tissue distribution, present in guard cells (at protein level).

It is found in the cell membrane. It localises to the cytoplasm. The enzyme catalyses L-seryl-[protein] + ATP = O-phospho-L-seryl-[protein] + ADP + H(+). It carries out the reaction L-threonyl-[protein] + ATP = O-phospho-L-threonyl-[protein] + ADP + H(+). Its activity is regulated as follows. Autophosphorylation is inhibited by staurosporine, but not by tyrphostin 9, sphingosine, GW5074 and BML-265. In terms of biological role, protein kinase that acts as a blue light (BL) photoreceptor in a signal-transduction pathway for photo-induced movements. Triggers the phosphorylation of AHA1 and AHA2 C-terminal penultimate Thr in guard cells to activate them and induce stomatal opening in response to blue light (BL). Also phosphorylates BLUS1, a kinase involved in stomatal opening. Mediates the phosphorylation of CBC1 in stomata, but not of CBC2, in response to blue light. Required for blue light mediated mRNA destabilization. Mediates calcium spiking of extracellular origin in response to a low rate of blue light. Also mediates rapid membrane depolarization and growth inhibition in response to blue light. Necessary for root phototropism. Involved in hypocotyl phototropism under a low rate but not under a high rate of blue light. Contributes to the chloroplast accumulation but seems not to be required for chloroplast translocation. Regulates stomata opening and photomorphogenesis response of leaf tissue. Confers sensitivity to drought. Not involved in hypocotyl elongation inhibition, anthocyanin accumulation or cotyledon opening. Involved in the regulation of leaf position and morphology via the phosphorylation of ABCB19 during blue light responses to modulate auxin distribution. This chain is Phototropin-1, found in Arabidopsis thaliana (Mouse-ear cress).